Here is a 550-residue protein sequence, read N- to C-terminus: Methionine--tRNA ligase (550 aa).

A 'HIGH' region motif is present at residues 13 to 23; it reads PYANGPLHFGH. Zn(2+) is bound by residues Cys-145, Cys-148, Cys-158, and Cys-161. Residues 331 to 335 carry the 'KMSKS' region motif; that stretch reads QFSKS. Position 334 (Lys-334) interacts with ATP.

Belongs to the class-I aminoacyl-tRNA synthetase family. MetG type 1 subfamily. In terms of assembly, monomer. Zn(2+) serves as cofactor.

The protein resides in the cytoplasm. The enzyme catalyses tRNA(Met) + L-methionine + ATP = L-methionyl-tRNA(Met) + AMP + diphosphate. Functionally, is required not only for elongation of protein synthesis but also for the initiation of all mRNA translation through initiator tRNA(fMet) aminoacylation. This is Methionine--tRNA ligase (metG) from Chlamydia trachomatis serovar D (strain ATCC VR-885 / DSM 19411 / UW-3/Cx).